The chain runs to 325 residues: Probable tRNA pseudouridine synthase B (325 aa).

Catalysis depends on D69, which acts as the Nucleophile. The 76-residue stretch at 236–311 (LPKIVIKDSA…IAADIQRVMM (76 aa)) folds into the PUA domain.

The protein belongs to the pseudouridine synthase TruB family. Type 2 subfamily.

It catalyses the reaction uridine(55) in tRNA = pseudouridine(55) in tRNA. Could be responsible for synthesis of pseudouridine from uracil-55 in the psi GC loop of transfer RNAs. The protein is Probable tRNA pseudouridine synthase B of Archaeoglobus fulgidus (strain ATCC 49558 / DSM 4304 / JCM 9628 / NBRC 100126 / VC-16).